We begin with the raw amino-acid sequence, 372 residues long: tRNA-specific 2-thiouridylase MnmA (372 aa).

ATP is bound by residues 16-23 (GMSGGVDS) and Met42. Positions 102 to 104 (NPD) are interaction with target base in tRNA. Residue Cys107 is the Nucleophile of the active site. Cys107 and Cys205 are disulfide-bonded. An ATP-binding site is contributed by Gly132. The tract at residues 155-157 (KDQ) is interaction with tRNA. Cys205 functions as the Cysteine persulfide intermediate in the catalytic mechanism. The interval 317-318 (RY) is interaction with tRNA.

The protein belongs to the MnmA/TRMU family.

It is found in the cytoplasm. The catalysed reaction is S-sulfanyl-L-cysteinyl-[protein] + uridine(34) in tRNA + AH2 + ATP = 2-thiouridine(34) in tRNA + L-cysteinyl-[protein] + A + AMP + diphosphate + H(+). In terms of biological role, catalyzes the 2-thiolation of uridine at the wobble position (U34) of tRNA, leading to the formation of s(2)U34. This chain is tRNA-specific 2-thiouridylase MnmA, found in Shewanella baltica (strain OS185).